Here is a 235-residue protein sequence, read N- to C-terminus: MKYKRILLKLSGEALMGDRQYGIDPKRLAEYADEIKQIHDLGVQIAIVIGGGNIFRGIAGASNGMDRVQGDYMGMLATVINGMALQGALEEKGMLTRLQTALKIEAIAEPYIKRRAVRHLEKNRIVIFGAGTGNPYFTTDTAAVLRGVEVDADVILKGTRVDGIYNVDPEKNKDAVKFDNISFEDVLKKGLNVMDTTAFTLSQENKLPIIVFDMNKEGNLLKICKGENIGTVVNI.

9-12 (KLSG) provides a ligand contact to ATP. Glycine 51 is a UMP binding site. The ATP site is built by glycine 52 and arginine 56. Residues aspartate 71 and 132 to 139 (TGNPYFTT) each bind UMP. The ATP site is built by threonine 159, tyrosine 165, and aspartate 168.

This sequence belongs to the UMP kinase family. Homohexamer.

The protein localises to the cytoplasm. The enzyme catalyses UMP + ATP = UDP + ADP. The protein operates within pyrimidine metabolism; CTP biosynthesis via de novo pathway; UDP from UMP (UMPK route): step 1/1. Inhibited by UTP. Catalyzes the reversible phosphorylation of UMP to UDP. The chain is Uridylate kinase from Flavobacterium psychrophilum (strain ATCC 49511 / DSM 21280 / CIP 103535 / JIP02/86).